Here is a 311-residue protein sequence, read N- to C-terminus: Deoxyhypusine hydroxylase (311 aa).

HEAT-like PBS-type repeat units follow at residues 69 to 95 (LKHE…VLEN), 102 to 128 (VRHE…YFKN), 196 to 222 (ERYR…GLDD), 228 to 254 (FKHE…TLKD), and 261 to 287 (VRHE…FLND). Fe cation-binding residues include His-71, Glu-72, His-104, and Glu-105. The Fe cation site is built by His-230, Glu-231, His-263, and Glu-264.

The protein belongs to the deoxyhypusine hydroxylase family. It depends on Fe(2+) as a cofactor.

The protein resides in the cytoplasm. The protein localises to the nucleus. It catalyses the reaction [eIF5A protein]-deoxyhypusine + AH2 + O2 = [eIF5A protein]-hypusine + A + H2O. It participates in protein modification; eIF5A hypusination. In terms of biological role, catalyzes the hydroxylation of the N(6)-(4-aminobutyl)-L-lysine intermediate to form hypusine, an essential post-translational modification only found in mature eIF-5A factor. The protein is Deoxyhypusine hydroxylase of Debaryomyces hansenii (strain ATCC 36239 / CBS 767 / BCRC 21394 / JCM 1990 / NBRC 0083 / IGC 2968) (Yeast).